Consider the following 325-residue polypeptide: ATP phosphoribosyltransferase (325 aa).

It belongs to the ATP phosphoribosyltransferase family. Long subfamily. Mg(2+) is required as a cofactor.

It localises to the cytoplasm. The enzyme catalyses 1-(5-phospho-beta-D-ribosyl)-ATP + diphosphate = 5-phospho-alpha-D-ribose 1-diphosphate + ATP. It functions in the pathway amino-acid biosynthesis; L-histidine biosynthesis; L-histidine from 5-phospho-alpha-D-ribose 1-diphosphate: step 1/9. Feedback inhibited by histidine. Catalyzes the condensation of ATP and 5-phosphoribose 1-diphosphate to form N'-(5'-phosphoribosyl)-ATP (PR-ATP). Has a crucial role in the pathway because the rate of histidine biosynthesis seems to be controlled primarily by regulation of HisG enzymatic activity. This Bradyrhizobium diazoefficiens (strain JCM 10833 / BCRC 13528 / IAM 13628 / NBRC 14792 / USDA 110) protein is ATP phosphoribosyltransferase.